The primary structure comprises 87 residues: uncharacterized protein (87 aa).

The protein to A.fulgidus AF_1348 and AF_1363.

This is an uncharacterized protein from Archaeoglobus fulgidus (strain ATCC 49558 / DSM 4304 / JCM 9628 / NBRC 100126 / VC-16).